The primary structure comprises 315 residues: Ribose-phosphate pyrophosphokinase (315 aa).

ATP-binding positions include 41-43 (DGE) and 100-101 (RQ). Mg(2+) is bound by residues His-134 and Asp-173. The active site involves Lys-196. Residues Arg-198, Asp-222, and 226–230 (DTAGT) contribute to the D-ribose 5-phosphate site.

This sequence belongs to the ribose-phosphate pyrophosphokinase family. Class I subfamily. Homohexamer. It depends on Mg(2+) as a cofactor.

The protein localises to the cytoplasm. It carries out the reaction D-ribose 5-phosphate + ATP = 5-phospho-alpha-D-ribose 1-diphosphate + AMP + H(+). It participates in metabolic intermediate biosynthesis; 5-phospho-alpha-D-ribose 1-diphosphate biosynthesis; 5-phospho-alpha-D-ribose 1-diphosphate from D-ribose 5-phosphate (route I): step 1/1. Involved in the biosynthesis of the central metabolite phospho-alpha-D-ribosyl-1-pyrophosphate (PRPP) via the transfer of pyrophosphoryl group from ATP to 1-hydroxyl of ribose-5-phosphate (Rib-5-P). The polypeptide is Ribose-phosphate pyrophosphokinase (Bacillus caldolyticus).